The primary structure comprises 268 residues: Shikimate dehydrogenase (NADP(+)) (268 aa).

Residues 15 to 17 (SKS) and T60 contribute to the shikimate site. The Proton acceptor role is filled by K64. Shikimate-binding residues include N85 and D101. NADP(+) contacts are provided by residues 121–125 (GAGGS) and L208. Y210 is a shikimate binding site. Position 230 (G230) interacts with NADP(+).

The protein belongs to the shikimate dehydrogenase family. In terms of assembly, homodimer.

The catalysed reaction is shikimate + NADP(+) = 3-dehydroshikimate + NADPH + H(+). It functions in the pathway metabolic intermediate biosynthesis; chorismate biosynthesis; chorismate from D-erythrose 4-phosphate and phosphoenolpyruvate: step 4/7. Involved in the biosynthesis of the chorismate, which leads to the biosynthesis of aromatic amino acids. Catalyzes the reversible NADPH linked reduction of 3-dehydroshikimate (DHSA) to yield shikimate (SA). This Helicobacter hepaticus (strain ATCC 51449 / 3B1) protein is Shikimate dehydrogenase (NADP(+)).